The chain runs to 182 residues: NADH-quinone oxidoreductase subunit B 2 (182 aa).

Cys55, Cys56, Cys120, and Cys150 together coordinate [4Fe-4S] cluster.

This sequence belongs to the complex I 20 kDa subunit family. In terms of assembly, NDH-1 is composed of 14 different subunits. Subunits NuoB, C, D, E, F, and G constitute the peripheral sector of the complex. It depends on [4Fe-4S] cluster as a cofactor.

It localises to the cell inner membrane. It carries out the reaction a quinone + NADH + 5 H(+)(in) = a quinol + NAD(+) + 4 H(+)(out). In terms of biological role, NDH-1 shuttles electrons from NADH, via FMN and iron-sulfur (Fe-S) centers, to quinones in the respiratory chain. The immediate electron acceptor for the enzyme in this species is believed to be ubiquinone. Couples the redox reaction to proton translocation (for every two electrons transferred, four hydrogen ions are translocated across the cytoplasmic membrane), and thus conserves the redox energy in a proton gradient. The polypeptide is NADH-quinone oxidoreductase subunit B 2 (Sorangium cellulosum (strain So ce56) (Polyangium cellulosum (strain So ce56))).